Here is an 823-residue protein sequence, read N- to C-terminus: Leucine--tRNA ligase (823 aa).

Positions 42–52 (PYPSGTLHMGH) match the 'HIGH' region motif. The 'KMSKS' region signature appears at 575-579 (KMSKS). Residue lysine 578 coordinates ATP.

It belongs to the class-I aminoacyl-tRNA synthetase family.

The protein localises to the cytoplasm. The catalysed reaction is tRNA(Leu) + L-leucine + ATP = L-leucyl-tRNA(Leu) + AMP + diphosphate. This chain is Leucine--tRNA ligase, found in Legionella pneumophila (strain Lens).